The sequence spans 906 residues: Cadherin-2 (906 aa).

An N-terminal signal peptide occupies residues 1 to 25 (MCRIAGAPRTLLPLLAALLQASVEA). The propeptide occupies 26 to 159 (SGEIALCKTG…HSGHLQRQKR (134 aa)). Phosphoserine is present on residues Ser96 and Ser135. Cadherin domains follow at residues 160-267 (DWVI…RPEF), 268-382 (LHQV…PPEF), 383-497 (TAMT…NPYF), 498-603 (APNP…DNAP), and 604-714 (QVLP…DVDR). The Extracellular portion of the chain corresponds to 160–724 (DWVIPPINLP…IVGAGLGTGA (565 aa)). Position 170 (Glu170) interacts with Ca(2+). N-linked (GlcNAc...) asparagine glycosylation occurs at Asn190. Ca(2+) contacts are provided by Asp226, Glu228, Asp259, Met260, Asn261, Asp262, and Asn263. Asn273 carries an N-linked (GlcNAc...) asparagine glycan. Asp293, Asp295, and Asn301 together coordinate Ca(2+). A glycan (N-linked (GlcNAc...) asparagine) is linked at Asn325. Asp353 contacts Ca(2+). Residues Asn402, Asn572, Asn622, Asn651, and Asn692 are each glycosylated (N-linked (GlcNAc...) asparagine). Residues 725 to 745 (IIAILLCIIILLILVLMFVVW) traverse the membrane as a helical segment. Residues 746–906 (MKRRDKERQA…LADMYGGGDD (161 aa)) lie on the Cytoplasmic side of the membrane. Low complexity predominate over residues 863–880 (SGSTAGSLSSLNSSSSGG). The interval 863–884 (SGSTAGSLSSLNSSSSGGEQDY) is disordered.

Homodimer (via extracellular region). Can also form heterodimers with other cadherins (via extracellular region). Dimerization occurs in trans, i.e. with a cadherin chain from another cell. Interacts with CDCP1. Interacts with PCDH8; this complex may also include TAOK2. The interaction with PCDH8 may lead to internalization through TAOK2/p38 MAPK pathway. Identified in a complex containing FGFR4, NCAM1, CDH2, PLCG1, FRS2, SRC, SHC1, GAP43 and CTTN. May interact with OBSCN (via protein kinase domain 2). Interacts with FBXO45. In terms of processing, cleaved by MMP24. Ectodomain cleavage leads to the generation of a soluble 90 kDa N-terminal soluble fragment and a 45 kDa membrane-bound C-terminal fragment 1 (CTF1), which is further cleaved by gamma-secretase into a 35 kDa. Cleavage in neural stem cells by MMP24 affects CDH2-mediated anchorage of neural stem cells to ependymocytes in the adult subependymal zone, leading to modulate neural stem cell quiescence.

The protein localises to the cell membrane. Its subcellular location is the sarcolemma. The protein resides in the cell junction. It localises to the cell surface. It is found in the desmosome. The protein localises to the adherens junction. Its function is as follows. Calcium-dependent cell adhesion protein; preferentially mediates homotypic cell-cell adhesion by dimerization with a CDH2 chain from another cell. Cadherins may thus contribute to the sorting of heterogeneous cell types. Acts as a regulator of neural stem cells quiescence by mediating anchorage of neural stem cells to ependymocytes in the adult subependymal zone: upon cleavage by MMP24, CDH2-mediated anchorage is affected, leading to modulate neural stem cell quiescence. Plays a role in cell-to-cell junction formation between pancreatic beta cells and neural crest stem (NCS) cells, promoting the formation of processes by NCS cells. Required for proper neurite branching. Required for pre- and postsynaptic organization. CDH2 may be involved in neuronal recognition mechanism. In hippocampal neurons, may regulate dendritic spine density. The sequence is that of Cadherin-2 (CDH2) from Callithrix jacchus (White-tufted-ear marmoset).